The chain runs to 518 residues: Bifunctional purine biosynthesis protein PurH (518 aa).

In terms of domain architecture, MGS-like spans 1-144 (MSKRALISVS…KNHAAVTVVC (144 aa)).

Belongs to the PurH family.

It carries out the reaction (6R)-10-formyltetrahydrofolate + 5-amino-1-(5-phospho-beta-D-ribosyl)imidazole-4-carboxamide = 5-formamido-1-(5-phospho-D-ribosyl)imidazole-4-carboxamide + (6S)-5,6,7,8-tetrahydrofolate. The catalysed reaction is IMP + H2O = 5-formamido-1-(5-phospho-D-ribosyl)imidazole-4-carboxamide. Its pathway is purine metabolism; IMP biosynthesis via de novo pathway; 5-formamido-1-(5-phospho-D-ribosyl)imidazole-4-carboxamide from 5-amino-1-(5-phospho-D-ribosyl)imidazole-4-carboxamide (10-formyl THF route): step 1/1. It functions in the pathway purine metabolism; IMP biosynthesis via de novo pathway; IMP from 5-formamido-1-(5-phospho-D-ribosyl)imidazole-4-carboxamide: step 1/1. The polypeptide is Bifunctional purine biosynthesis protein PurH (Lactococcus lactis subsp. cremoris (strain SK11)).